A 205-amino-acid chain; its full sequence is Peptidyl-tRNA hydrolase (205 aa).

TRNA is bound at residue tyrosine 17. Histidine 22 acts as the Proton acceptor in catalysis. Tyrosine 73 and asparagine 75 together coordinate tRNA.

It belongs to the PTH family. As to quaternary structure, monomer.

Its subcellular location is the cytoplasm. It catalyses the reaction an N-acyl-L-alpha-aminoacyl-tRNA + H2O = an N-acyl-L-amino acid + a tRNA + H(+). Hydrolyzes ribosome-free peptidyl-tRNAs (with 1 or more amino acids incorporated), which drop off the ribosome during protein synthesis, or as a result of ribosome stalling. Functionally, catalyzes the release of premature peptidyl moieties from peptidyl-tRNA molecules trapped in stalled 50S ribosomal subunits, and thus maintains levels of free tRNAs and 50S ribosomes. The chain is Peptidyl-tRNA hydrolase from Maridesulfovibrio salexigens (strain ATCC 14822 / DSM 2638 / NCIMB 8403 / VKM B-1763) (Desulfovibrio salexigens).